The following is a 307-amino-acid chain: GTPase Era (307 aa).

The Era-type G domain occupies 14–184 (HSGFVAIVGK…REQILDILPE (171 aa)). The G1 stretch occupies residues 22 to 29 (GKPNVGKS). GTP is bound at residue 22–29 (GKPNVGKS). Positions 48–52 (QTTRR) are G2. The segment at 69-72 (DTPG) is G3. Residues 69-73 (DTPGL) and 131-134 (NKTD) contribute to the GTP site. The segment at 131 to 134 (NKTD) is G4. Residues 162–164 (LSA) form a G5 region. Positions 215-292 (LREELPYAVA…FLGLEVIVIP (78 aa)) constitute a KH type-2 domain.

It belongs to the TRAFAC class TrmE-Era-EngA-EngB-Septin-like GTPase superfamily. Era GTPase family. In terms of assembly, monomer.

Its subcellular location is the cytoplasm. It localises to the cell membrane. An essential GTPase that binds both GDP and GTP, with rapid nucleotide exchange. Plays a role in 16S rRNA processing and 30S ribosomal subunit biogenesis and possibly also in cell cycle regulation and energy metabolism. This chain is GTPase Era, found in Deinococcus deserti (strain DSM 17065 / CIP 109153 / LMG 22923 / VCD115).